The sequence spans 292 residues: uncharacterized protein (292 aa).

A Glycyl lysine isopeptide (Lys-Gly) (interchain with G-Cter in SUMO2) cross-link involves residue Lys8. Residues 47–67 form a disordered region; it reads TKRKMLPSSSSRMRSDGFDEE. Lys76 is covalently cross-linked (Glycyl lysine isopeptide (Lys-Gly) (interchain with G-Cter in SUMO2)). Position 94 is a phosphothreonine (Asn94). 2 positions are modified to phosphoserine: Lys96 and Phe97. A disordered region spans residues 122–292; the sequence is ETDSDQQDIT…ERSAESSEDD (171 aa). At Thr123 the chain carries Phosphothreonine. Phosphoserine occurs at positions 125 and 126. Polar residues predominate over residues 128–140; it reads QDITNGKKTSPQV. The segment covering 147–173 has biased composition (basic residues); the sequence is SRKHKKSKKSHKKKQKKRSHKKQKKSK. The segment covering 180 to 194 has biased composition (polar residues); the sequence is TADSSSEFSEETGAS. Basic residues-rich tracts occupy residues 197–215 and 247–259; these read RKGKQPHKRKKKSRKKSLK and KKTKRKKREKKAH. Residues 280 to 292 are compositionally biased toward basic and acidic residues; it reads ATDERSAESSEDD.

This is an uncharacterized protein from Homo sapiens (Human).